A 152-amino-acid chain; its full sequence is Probable methionine-R-sulfoxide reductase B (152 aa).

In terms of domain architecture, MsrB spans 27–151 (QTEWKSVLPN…NSVCMAFEKK (125 aa)). Residues cysteine 66, cysteine 69, cysteine 116, and cysteine 119 each coordinate Zn(2+). Cysteine 140 serves as the catalytic Nucleophile.

This sequence belongs to the MsrB Met sulfoxide reductase family. Zn(2+) serves as cofactor.

The catalysed reaction is L-methionyl-[protein] + [thioredoxin]-disulfide + H2O = L-methionyl-(R)-S-oxide-[protein] + [thioredoxin]-dithiol. Its function is as follows. Methionine-sulfoxide reductase that specifically reduces methionine (R)-sulfoxide back to methionine. While in many cases, methionine oxidation is the result of random oxidation following oxidative stress, methionine oxidation is also a post-translational modification that takes place on specific residue. The chain is Probable methionine-R-sulfoxide reductase B from Caenorhabditis elegans.